Consider the following 615-residue polypeptide: DNA mismatch repair protein MutL (615 aa).

A disordered region spans residues 363–397 (FAEPAAREPVAPRYTPAPASGSRPAAPWPNAQPGY). Over residues 364–391 (AEPAAREPVAPRYTPAPASGSRPAAPWP) the composition is skewed to low complexity.

The protein belongs to the DNA mismatch repair MutL/HexB family.

This protein is involved in the repair of mismatches in DNA. It is required for dam-dependent methyl-directed DNA mismatch repair. May act as a 'molecular matchmaker', a protein that promotes the formation of a stable complex between two or more DNA-binding proteins in an ATP-dependent manner without itself being part of a final effector complex. The polypeptide is DNA mismatch repair protein MutL (Shigella boydii serotype 18 (strain CDC 3083-94 / BS512)).